The primary structure comprises 370 residues: Cobalt-precorrin-5B C(1)-methyltransferase (370 aa).

The protein belongs to the CbiD family.

The enzyme catalyses Co-precorrin-5B + S-adenosyl-L-methionine = Co-precorrin-6A + S-adenosyl-L-homocysteine. It functions in the pathway cofactor biosynthesis; adenosylcobalamin biosynthesis; cob(II)yrinate a,c-diamide from sirohydrochlorin (anaerobic route): step 6/10. In terms of biological role, catalyzes the methylation of C-1 in cobalt-precorrin-5B to form cobalt-precorrin-6A. This Prochlorococcus marinus (strain MIT 9215) protein is Cobalt-precorrin-5B C(1)-methyltransferase.